Reading from the N-terminus, the 164-residue chain is Pyruvoyl-dependent arginine decarboxylase (164 aa).

Ser52 is modified (pyruvic acid (Ser)).

Belongs to the PdaD family. Pyruvate is required as a cofactor.

The enzyme catalyses L-arginine + H(+) = agmatine + CO2. This Methanococcus vannielii (strain ATCC 35089 / DSM 1224 / JCM 13029 / OCM 148 / SB) protein is Pyruvoyl-dependent arginine decarboxylase.